A 211-amino-acid polypeptide reads, in one-letter code: Riboflavin kinase (211 aa).

An H-T-H motif-like region spans residues 1–81 (MKCIDRRLIG…DLLRYFNILS (81 aa)). The segment at 82–211 (IRLSGRVVSG…DRVEIEIYLE (130 aa)) is riboflavin kinase. Residue 91–96 (GLGEGA) coordinates CDP. Mg(2+) is bound by residues T120 and N122. The FMN site is built by T177 and E185. Residue 190-193 (FKLR) coordinates CDP.

The protein belongs to the archaeal riboflavin kinase family. Mg(2+) is required as a cofactor.

The catalysed reaction is riboflavin + CTP = CDP + FMN + H(+). It functions in the pathway cofactor biosynthesis; FMN biosynthesis; FMN from riboflavin (CTP route): step 1/1. Functionally, catalyzes the CTP-dependent phosphorylation of riboflavin (vitamin B2) to form flavin mononucleotide (FMN). In Pyrobaculum islandicum (strain DSM 4184 / JCM 9189 / GEO3), this protein is Riboflavin kinase (ribK).